The chain runs to 345 residues: S-adenosylmethionine:tRNA ribosyltransferase-isomerase (345 aa).

Belongs to the QueA family. As to quaternary structure, monomer.

It localises to the cytoplasm. The catalysed reaction is 7-aminomethyl-7-carbaguanosine(34) in tRNA + S-adenosyl-L-methionine = epoxyqueuosine(34) in tRNA + adenine + L-methionine + 2 H(+). It participates in tRNA modification; tRNA-queuosine biosynthesis. Transfers and isomerizes the ribose moiety from AdoMet to the 7-aminomethyl group of 7-deazaguanine (preQ1-tRNA) to give epoxyqueuosine (oQ-tRNA). This Anaeromyxobacter dehalogenans (strain 2CP-C) protein is S-adenosylmethionine:tRNA ribosyltransferase-isomerase.